The chain runs to 209 residues: Putative 3-methyladenine DNA glycosylase (209 aa).

The disordered stretch occupies residues 189 to 209 (HVSTTRLGAPKKKRQKRLERR). Positions 197 to 209 (APKKKRQKRLERR) are enriched in basic residues.

It belongs to the DNA glycosylase MPG family.

This chain is Putative 3-methyladenine DNA glycosylase, found in Chlorobaculum parvum (strain DSM 263 / NCIMB 8327) (Chlorobium vibrioforme subsp. thiosulfatophilum).